The sequence spans 330 residues: 4-hydroxythreonine-4-phosphate dehydrogenase (330 aa).

Residues His-134 and Thr-135 each contribute to the substrate site. Residues His-163, His-208, and His-263 each coordinate a divalent metal cation. 3 residues coordinate substrate: Lys-271, Asn-280, and Arg-289.

The protein belongs to the PdxA family. As to quaternary structure, homodimer. The cofactor is Zn(2+). It depends on Mg(2+) as a cofactor. Co(2+) is required as a cofactor.

Its subcellular location is the cytoplasm. The enzyme catalyses 4-(phosphooxy)-L-threonine + NAD(+) = 3-amino-2-oxopropyl phosphate + CO2 + NADH. It participates in cofactor biosynthesis; pyridoxine 5'-phosphate biosynthesis; pyridoxine 5'-phosphate from D-erythrose 4-phosphate: step 4/5. In terms of biological role, catalyzes the NAD(P)-dependent oxidation of 4-(phosphooxy)-L-threonine (HTP) into 2-amino-3-oxo-4-(phosphooxy)butyric acid which spontaneously decarboxylates to form 3-amino-2-oxopropyl phosphate (AHAP). In Methylococcus capsulatus (strain ATCC 33009 / NCIMB 11132 / Bath), this protein is 4-hydroxythreonine-4-phosphate dehydrogenase.